Consider the following 279-residue polypeptide: Phosphatidylglycerol--prolipoprotein diacylglyceryl transferase (279 aa).

Helical transmembrane passes span 22–42, 52–72, and 89–109; these read WYGI…QAAL, LIDI…IYFV, and IWHG…SGII. Arg137 is a binding site for a 1,2-diacyl-sn-glycero-3-phospho-(1'-sn-glycerol). Helical transmembrane passes span 203 to 223 and 235 to 255; these read LGET…FVEA and IRVA…FVIY.

The protein belongs to the Lgt family.

The protein localises to the cell membrane. It carries out the reaction L-cysteinyl-[prolipoprotein] + a 1,2-diacyl-sn-glycero-3-phospho-(1'-sn-glycerol) = an S-1,2-diacyl-sn-glyceryl-L-cysteinyl-[prolipoprotein] + sn-glycerol 1-phosphate + H(+). It participates in protein modification; lipoprotein biosynthesis (diacylglyceryl transfer). Functionally, catalyzes the transfer of the diacylglyceryl group from phosphatidylglycerol to the sulfhydryl group of the N-terminal cysteine of a prolipoprotein, the first step in the formation of mature lipoproteins. The protein is Phosphatidylglycerol--prolipoprotein diacylglyceryl transferase of Staphylococcus epidermidis (strain ATCC 35984 / DSM 28319 / BCRC 17069 / CCUG 31568 / BM 3577 / RP62A).